Here is a 679-residue protein sequence, read N- to C-terminus: Glycine--tRNA ligase beta subunit (679 aa).

Belongs to the class-II aminoacyl-tRNA synthetase family. In terms of assembly, tetramer of two alpha and two beta subunits.

Its subcellular location is the cytoplasm. The catalysed reaction is tRNA(Gly) + glycine + ATP = glycyl-tRNA(Gly) + AMP + diphosphate. This Streptococcus equi subsp. zooepidemicus (strain H70) protein is Glycine--tRNA ligase beta subunit.